Reading from the N-terminus, the 195-residue chain is MYLEQVKTELFEAQDVLNKFISNEQNIKLIQQAALLISDSFKQHGKVLSCGNGGSHCDAMHFAEELTGRYRENRPGYPAIAISDVSHLSCVSNDFGYEHVFSRYVEAVGQKGDVLLGISTSGNSKNVLNAIEAAKAKGMKVIALTGKDGGKMAGLADVEIRVPHFRFADRIQEIHIKVIHILIMLIEFEMAKIRQ.

The 159-residue stretch at 37–195 (ISDSFKQHGK…IEFEMAKIRQ (159 aa)) folds into the SIS domain. 52–54 (NGG) serves as a coordination point for substrate. The Zn(2+) site is built by histidine 61 and glutamate 65. Residues glutamate 65, 93–94 (ND), 119–121 (STS), serine 124, and glutamine 172 contribute to the substrate site. The Zn(2+) site is built by glutamine 172 and histidine 180.

It belongs to the SIS family. GmhA subfamily. Homotetramer. Requires Zn(2+) as cofactor.

The protein localises to the cytoplasm. The catalysed reaction is 2 D-sedoheptulose 7-phosphate = D-glycero-alpha-D-manno-heptose 7-phosphate + D-glycero-beta-D-manno-heptose 7-phosphate. The protein operates within carbohydrate biosynthesis; D-glycero-D-manno-heptose 7-phosphate biosynthesis; D-glycero-alpha-D-manno-heptose 7-phosphate and D-glycero-beta-D-manno-heptose 7-phosphate from sedoheptulose 7-phosphate: step 1/1. Functionally, catalyzes the isomerization of sedoheptulose 7-phosphate in D-glycero-D-manno-heptose 7-phosphate. This chain is Phosphoheptose isomerase, found in Histophilus somni (strain 2336) (Haemophilus somnus).